Reading from the N-terminus, the 226-residue chain is Late protein I226R (226 aa).

The first 16 residues, 1–16, serve as a signal peptide directing secretion; sequence MKMETFLVCLFHNADG. Residues Asn142 and Asn164 are each glycosylated (N-linked (GlcNAc...) asparagine; by host).

This sequence belongs to the asfivirus I226R family.

In terms of biological role, plays a role in the inhibition of host NF-kappa-B and IRF3 signaling pathways. Mechanistically, promotes the degradation of host IKBKG through enhancing its ubiquitination leading to inhibition of both pathways. The protein is Late protein I226R of Ornithodoros (relapsing fever ticks).